The primary structure comprises 155 residues: Putative pre-16S rRNA nuclease (155 aa).

This sequence belongs to the YqgF nuclease family.

It is found in the cytoplasm. In terms of biological role, could be a nuclease involved in processing of the 5'-end of pre-16S rRNA. The polypeptide is Putative pre-16S rRNA nuclease (Novosphingobium aromaticivorans (strain ATCC 700278 / DSM 12444 / CCUG 56034 / CIP 105152 / NBRC 16084 / F199)).